A 316-amino-acid chain; its full sequence is Ribosomal protein L11 methyltransferase (316 aa).

Positions 161, 182, 204, and 249 each coordinate S-adenosyl-L-methionine.

It belongs to the methyltransferase superfamily. PrmA family.

It localises to the cytoplasm. It catalyses the reaction L-lysyl-[protein] + 3 S-adenosyl-L-methionine = N(6),N(6),N(6)-trimethyl-L-lysyl-[protein] + 3 S-adenosyl-L-homocysteine + 3 H(+). Methylates ribosomal protein L11. In Ruminiclostridium cellulolyticum (strain ATCC 35319 / DSM 5812 / JCM 6584 / H10) (Clostridium cellulolyticum), this protein is Ribosomal protein L11 methyltransferase.